A 496-amino-acid polypeptide reads, in one-letter code: Probable malate:quinone oxidoreductase (496 aa).

This sequence belongs to the MQO family. FAD is required as a cofactor.

It carries out the reaction (S)-malate + a quinone = a quinol + oxaloacetate. The protein operates within carbohydrate metabolism; tricarboxylic acid cycle; oxaloacetate from (S)-malate (quinone route): step 1/1. This Prochlorococcus marinus (strain MIT 9313) protein is Probable malate:quinone oxidoreductase.